A 177-amino-acid polypeptide reads, in one-letter code: Large ribosomal subunit protein uL6 (177 aa).

The protein belongs to the universal ribosomal protein uL6 family. As to quaternary structure, part of the 50S ribosomal subunit.

Functionally, this protein binds to the 23S rRNA, and is important in its secondary structure. It is located near the subunit interface in the base of the L7/L12 stalk, and near the tRNA binding site of the peptidyltransferase center. In Methylorubrum extorquens (strain CM4 / NCIMB 13688) (Methylobacterium extorquens), this protein is Large ribosomal subunit protein uL6.